A 356-amino-acid chain; its full sequence is S-adenosylmethionine:tRNA ribosyltransferase-isomerase (356 aa).

Belongs to the QueA family. Monomer.

The protein resides in the cytoplasm. It carries out the reaction 7-aminomethyl-7-carbaguanosine(34) in tRNA + S-adenosyl-L-methionine = epoxyqueuosine(34) in tRNA + adenine + L-methionine + 2 H(+). The protein operates within tRNA modification; tRNA-queuosine biosynthesis. In terms of biological role, transfers and isomerizes the ribose moiety from AdoMet to the 7-aminomethyl group of 7-deazaguanine (preQ1-tRNA) to give epoxyqueuosine (oQ-tRNA). The polypeptide is S-adenosylmethionine:tRNA ribosyltransferase-isomerase (Shigella boydii serotype 18 (strain CDC 3083-94 / BS512)).